Here is a 212-residue protein sequence, read N- to C-terminus: Leucyl/phenylalanyl-tRNA--protein transferase (212 aa).

Belongs to the L/F-transferase family.

It is found in the cytoplasm. It catalyses the reaction N-terminal L-lysyl-[protein] + L-leucyl-tRNA(Leu) = N-terminal L-leucyl-L-lysyl-[protein] + tRNA(Leu) + H(+). The catalysed reaction is N-terminal L-arginyl-[protein] + L-leucyl-tRNA(Leu) = N-terminal L-leucyl-L-arginyl-[protein] + tRNA(Leu) + H(+). The enzyme catalyses L-phenylalanyl-tRNA(Phe) + an N-terminal L-alpha-aminoacyl-[protein] = an N-terminal L-phenylalanyl-L-alpha-aminoacyl-[protein] + tRNA(Phe). Functionally, functions in the N-end rule pathway of protein degradation where it conjugates Leu, Phe and, less efficiently, Met from aminoacyl-tRNAs to the N-termini of proteins containing an N-terminal arginine or lysine. The chain is Leucyl/phenylalanyl-tRNA--protein transferase from Allorhizobium ampelinum (strain ATCC BAA-846 / DSM 112012 / S4) (Agrobacterium vitis (strain S4)).